We begin with the raw amino-acid sequence, 29 residues long: Acidic phospholipase A2 Omo-E6 (29 aa).

Residues Tyr27 and Gly29 each contribute to the Ca(2+) site.

It depends on Ca(2+) as a cofactor. Expressed by the venom gland.

It is found in the secreted. It catalyses the reaction a 1,2-diacyl-sn-glycero-3-phosphocholine + H2O = a 1-acyl-sn-glycero-3-phosphocholine + a fatty acid + H(+). Functionally, snake venom phospholipase A2 (PLA2) that inhibits the ADP- and collagen-induced human platelet aggregation. Exhibits strong hydrolytic activities and prefers the anionic micelles (dPPC with deoxycholate) to the zwitterionic micelles (dPPC with Triton X-100). PLA2 catalyzes the calcium-dependent hydrolysis of the 2-acyl groups in 3-sn-phosphoglycerides. The protein is Acidic phospholipase A2 Omo-E6 of Ovophis monticola (Chinese mountain pitviper).